Here is a 294-residue protein sequence, read N- to C-terminus: NAD kinase (294 aa).

Residue Asp74 is the Proton acceptor of the active site. Residues 74-75 (DG), 148-149 (NE), His159, Arg176, Asp178, 189-194 (TAYSLS), and Gln249 each bind NAD(+).

It belongs to the NAD kinase family. A divalent metal cation is required as a cofactor.

Its subcellular location is the cytoplasm. The enzyme catalyses NAD(+) + ATP = ADP + NADP(+) + H(+). In terms of biological role, involved in the regulation of the intracellular balance of NAD and NADP, and is a key enzyme in the biosynthesis of NADP. Catalyzes specifically the phosphorylation on 2'-hydroxyl of the adenosine moiety of NAD to yield NADP. This chain is NAD kinase, found in Vibrio campbellii (strain ATCC BAA-1116).